The sequence spans 87 residues: Kappa-6-bungarotoxin (87 aa).

The first 21 residues, 1-21, serve as a signal peptide directing secretion; it reads MKTLLLSLVVVTIVCLDLGYT. Intrachain disulfides connect Cys-24–Cys-42, Cys-35–Cys-63, Cys-48–Cys-52, Cys-67–Cys-79, and Cys-80–Cys-85.

The protein belongs to the three-finger toxin family. Long-chain subfamily. Kappa-neurotoxin sub-subfamily. In terms of assembly, homo- and heterodimer; non-covalently linked. In terms of tissue distribution, expressed by the venom gland.

It localises to the secreted. Functionally, postsynaptic neurotoxin that binds and inhibits neuronal nicotinic acetylcholine receptors (nAChR) with high affinity (IC(50)&lt;100 nM). Is a selective, and slowly reversible antagonist of alpha-3/CHRNA3-containing and some alpha-4/CHRNA4-containing AChRs. In Bungarus multicinctus (Many-banded krait), this protein is Kappa-6-bungarotoxin.